The sequence spans 632 residues: 1-deoxy-D-xylulose-5-phosphate synthase (632 aa).

Residues H87 and 128-130 contribute to the thiamine diphosphate site; that span reads GHS. D159 serves as a coordination point for Mg(2+). Residues 160 to 161, N188, F295, and E378 contribute to the thiamine diphosphate site; that span reads GA. Residue N188 participates in Mg(2+) binding.

It belongs to the transketolase family. DXPS subfamily. In terms of assembly, homodimer. Mg(2+) serves as cofactor. The cofactor is thiamine diphosphate.

It carries out the reaction D-glyceraldehyde 3-phosphate + pyruvate + H(+) = 1-deoxy-D-xylulose 5-phosphate + CO2. It functions in the pathway metabolic intermediate biosynthesis; 1-deoxy-D-xylulose 5-phosphate biosynthesis; 1-deoxy-D-xylulose 5-phosphate from D-glyceraldehyde 3-phosphate and pyruvate: step 1/1. Catalyzes the acyloin condensation reaction between C atoms 2 and 3 of pyruvate and glyceraldehyde 3-phosphate to yield 1-deoxy-D-xylulose-5-phosphate (DXP). This Pseudomonas fluorescens (strain SBW25) protein is 1-deoxy-D-xylulose-5-phosphate synthase.